A 461-amino-acid polypeptide reads, in one-letter code: Tubulin gamma-2 chain (461 aa).

Position 142 to 148 (142 to 148 (AGGTGSG)) interacts with GTP.

The protein belongs to the tubulin family.

It localises to the cytoplasm. Its subcellular location is the cytoskeleton. The protein localises to the microtubule organizing center. The protein resides in the centrosome. Its function is as follows. Tubulin is the major constituent of microtubules. The gamma chain is found at microtubule organizing centers (MTOC) such as the spindle poles or the centrosome, suggesting that it is involved in the minus-end nucleation of microtubule assembly. This is Tubulin gamma-2 chain from Euplotoides octocarinatus (Freshwater ciliate).